A 148-amino-acid chain; its full sequence is uncharacterized protein (148 aa).

Residues 22–40 form a helical membrane-spanning segment; it reads YFLSLTVVISIIHLFTTCV. The histidine-rich stretch occupies residues 43–141; sequence HNHSTHFPYL…YYPISRHYLH (99 aa).

The protein localises to the host membrane. This is an uncharacterized protein from African swine fever virus (strain Badajoz 1971 Vero-adapted) (Ba71V).